Reading from the N-terminus, the 250-residue chain is Methylthioribulose-1-phosphate dehydratase (250 aa).

C103 contacts substrate. The Zn(2+) site is built by H121 and H123. The active-site Proton donor/acceptor is E146. H211 serves as a coordination point for Zn(2+).

The protein belongs to the aldolase class II family. MtnB subfamily. The cofactor is Zn(2+).

The protein localises to the cytoplasm. It carries out the reaction 5-(methylsulfanyl)-D-ribulose 1-phosphate = 5-methylsulfanyl-2,3-dioxopentyl phosphate + H2O. Its pathway is amino-acid biosynthesis; L-methionine biosynthesis via salvage pathway; L-methionine from S-methyl-5-thio-alpha-D-ribose 1-phosphate: step 2/6. Its function is as follows. Catalyzes the dehydration of methylthioribulose-1-phosphate (MTRu-1-P) into 2,3-diketo-5-methylthiopentyl-1-phosphate (DK-MTP-1-P). In Clavispora lusitaniae (strain ATCC 42720) (Yeast), this protein is Methylthioribulose-1-phosphate dehydratase.